Consider the following 381-residue polypeptide: Meiotic recombination protein SPO11-1 (381 aa).

Residues 23 to 162 (EEAATLLHRI…LNVVPVAKGL (140 aa)) form the Topo IIA-type catalytic domain. Catalysis depends on Y123, which acts as the O-(5'-phospho-DNA)-tyrosine intermediate. Mg(2+) contacts are provided by E209 and D261.

It belongs to the TOP6A family. It depends on Mg(2+) as a cofactor. In terms of tissue distribution, highly expressed in flowers before pollination. Expressed in roots and shoots.

Its subcellular location is the nucleus. It catalyses the reaction ATP-dependent breakage, passage and rejoining of double-stranded DNA.. In terms of biological role, required for meiotic recombination. Mediates DNA cleavage that forms the double-strand breaks (DSB) that initiate meiotic recombination. May be involved in plant growth and development, and stress tolerance. This is Meiotic recombination protein SPO11-1 (SPO11-1) from Oryza sativa subsp. indica (Rice).